Consider the following 69-residue polypeptide: Large ribosomal subunit protein uL30 (69 aa).

Belongs to the universal ribosomal protein uL30 family. In terms of assembly, part of the 50S ribosomal subunit.

The sequence is that of Large ribosomal subunit protein uL30 from Rhizobium etli (strain CIAT 652).